The primary structure comprises 37 residues: DDDCGWIMDDCTSDSDCCPNWVCSKTGFVKNICKYEM.

3 cysteine pairs are disulfide-bonded: cysteine 4–cysteine 18, cysteine 11–cysteine 23, and cysteine 17–cysteine 33.

Expressed by the venom gland.

It is found in the secreted. Its function is as follows. Blocks calcium channels (Cav). This Heteropoda venatoria (Brown huntsman spider) protein is Omega-sparatoxin-Hv1a.